The primary structure comprises 163 residues: Sorting nexin-3 (163 aa).

Positions 1–20 (MASDQDNSGLDAPGSQFHRP) are disordered. The PX domain occupies 42–159 (NFLEIEVRNP…AAFVQDPNWD (118 aa)). A 1,2-diacyl-sn-glycero-3-phospho-(1D-myo-inositol-3-phosphate) is bound by residues Arg-85, Ser-87, Lys-111, Arg-116, and Arg-125.

This sequence belongs to the sorting nexin family.

The protein resides in the cytoplasm. The protein localises to the golgi apparatus membrane. It localises to the prevacuolar compartment membrane. Its function is as follows. Required for retention of late Golgi membrane proteins. Component of the retrieval machinery that functions by direct interaction with the cytosolic tails of certain TGN membrane proteins during the sorting/budding process at the prevacuolar compartment. Binds phosphatidylinositol 3-phosphate (PtdIns(P3)). The protein is Sorting nexin-3 (SNX3) of Gibberella zeae (strain ATCC MYA-4620 / CBS 123657 / FGSC 9075 / NRRL 31084 / PH-1) (Wheat head blight fungus).